A 410-amino-acid chain; its full sequence is Beta-arrestin-2 (410 aa).

Y48 bears the Phosphotyrosine mark. Hydroxyproline; by PHD2 is present on residues P176 and P181. An interaction with TRAF6 region spans residues 241-410 (ADICLFSTAQ…KDDDCDDQFC (170 aa)). S361 bears the Phosphoserine mark. The interval 364-410 (RETDVPVDTNLIEFDTNYATDDDIVFEDFARLRLKGMKDDDCDDQFC) is interaction with AP2B1. Position 383 is a phosphothreonine (T383). Positions 386–396 (DIVFEDFARLR) match the [DE]-X(1,2)-F-X-X-[FL]-X-X-X-R motif motif.

Belongs to the arrestin family. Homooligomer; the self-association is mediated by InsP6-binding. Heterooligomer with ARRB1; the association is mediated by InsP6-binding. Interacts with ADRB2 and CHRM2. Interacts with PDE4A. Interacts with PDE4D. Interacts with MAPK10, MAPK1 and MAPK3. Interacts with DRD2. Interacts with FSHR. Interacts with CLTC. Interacts with HTR2C. Interacts with CCR5. Interacts with CXCR4. Interacts with SRC. Interacts with DUSP16; the interaction is interrupted by stimulation of AGTR1 and activation of MAPK10. Interacts with CHUK; the interaction is enhanced stimulation of ADRB2. Interacts with RELA. Interacts with MDM2; the interaction is enhanced by activation of GPCRs. Interacts with SLC9A5. Interacts with TRAF6. Interacts with IGF1R. Interacts with ENG. Interacts with ARRB2. Interacts with KIR2DL1, KIR2DL3 and KIR2DL4. Interacts with LDLR. Interacts with AP2B1. Interacts with C5AR1. Interacts with RAF1. Interacts with MAP2K1. Interacts with MAPK1. Interacts with MAPK10; the interaction enhances MAPK10 activation by MAP3K5. Interacts with MAP2K4; the interaction is enhanced by presence of MAP3K5 and MAPK10. Interacts with MAP3K5. Interacts with AKT1. Interacts with IKBKB and MAP3K14. Interacts with SMO (activated). Interacts with GSK3A and GSK3B. Interacts with CXCR4; the interaction is dependent on C-terminal phosphorylation of CXCR4 and allows activation of MAPK1 and MAPK3. Interacts with GPR143. Interacts with HCK and CXCR1 (phosphorylated). Associates with protein phosphatase 2A (PP2A). Interacts with ACKR3 and ACKR4. Interacts with ARRDC1; the interaction is direct. Interacts with GPR61, GPR62 and GPR135. Interacts (via NACHT and LRR domains) with NLRP3; this interaction is direct and inducible by omega-3 polyunsaturated fatty acids (PUFAs). Interacts with FFAR4 (via C-terminus); this interaction is stimulated by long-chain fatty acids (LCFAs). Interacts with GPR35. Interacts with GPR84. Interacts with TIGIT; this interaction inhibits the NF-kappa-B pathway. Interacts with TGFBR3. Phosphorylated at Thr-383 in the cytoplasm; probably dephosphorylated at the plasma membrane. The phosphorylation does not regulate internalization and recycling of ADRB2, interaction with clathrin or AP2B1. In terms of processing, the ubiquitination status appears to regulate the formation and trafficking of beta-arrestin-GPCR complexes and signaling. Ubiquitination appears to occur GPCR-specific. Ubiquitinated by MDM2; the ubiquitination is required for rapid internalization of ADRB2. Deubiquitinated by USP33; the deubiquitination leads to a dissociation of the beta-arrestin-GPCR complex. Stimulation of a class A GPCR, such as ADRB2, induces transient ubiquitination and subsequently promotes association with USP33. Stimulation of a class B GPCR promotes a sustained ubiquitination. Deubiquitinated by USP20; allowing USP20 to deubiquitinate TRAF6 leading to inhibition of NF-kappa-B signaling. Post-translationally, hydroxylation by PHD2 modulates the rate of internalization by slowing down recruitment to the plasma membrane and inhibiting subsequent co-internalization with class A receptors. In terms of tissue distribution, predominantly localized in neuronal tissues and in the spleen.

Its subcellular location is the cytoplasm. It localises to the nucleus. The protein resides in the cell membrane. The protein localises to the membrane. It is found in the clathrin-coated pit. Its subcellular location is the cytoplasmic vesicle. Functionally, functions in regulating agonist-mediated G-protein coupled receptor (GPCR) signaling by mediating both receptor desensitization and resensitization processes. During homologous desensitization, beta-arrestins bind to the GPRK-phosphorylated receptor and sterically preclude its coupling to the cognate G-protein; the binding appears to require additional receptor determinants exposed only in the active receptor conformation. The beta-arrestins target many receptors for internalization by acting as endocytic adapters (CLASPs, clathrin-associated sorting proteins) and recruiting the GPRCs to the adapter protein 2 complex 2 (AP-2) in clathrin-coated pits (CCPs). However, the extent of beta-arrestin involvement appears to vary significantly depending on the receptor, agonist and cell type. Internalized arrestin-receptor complexes traffic to intracellular endosomes, where they remain uncoupled from G-proteins. Two different modes of arrestin-mediated internalization occur. Class A receptors, like ADRB2, OPRM1, ENDRA, D1AR and ADRA1B dissociate from beta-arrestin at or near the plasma membrane and undergo rapid recycling. Class B receptors, like AVPR2, AGTR1, NTSR1, TRHR and TACR1 internalize as a complex with arrestin and traffic with it to endosomal vesicles, presumably as desensitized receptors, for extended periods of time. Receptor resensitization then requires that receptor-bound arrestin is removed so that the receptor can be dephosphorylated and returned to the plasma membrane. Mediates endocytosis of CCR7 following ligation of CCL19 but not CCL21. Involved in internalization of P2RY1, P2RY4, P2RY6 and P2RY11 and ATP-stimulated internalization of P2RY2. Involved in phosphorylation-dependent internalization of OPRD1 and subsequent recycling or degradation. Involved in ubiquitination of IGF1R. Beta-arrestins function as multivalent adapter proteins that can switch the GPCR from a G-protein signaling mode that transmits short-lived signals from the plasma membrane via small molecule second messengers and ion channels to a beta-arrestin signaling mode that transmits a distinct set of signals that are initiated as the receptor internalizes and transits the intracellular compartment. Acts as a signaling scaffold for MAPK pathways such as MAPK1/3 (ERK1/2) and MAPK10 (JNK3). ERK1/2 and JNK3 activated by the beta-arrestin scaffold are largely excluded from the nucleus and confined to cytoplasmic locations such as endocytic vesicles, also called beta-arrestin signalosomes. Acts as a signaling scaffold for the AKT1 pathway. GPCRs for which the beta-arrestin-mediated signaling relies on both ARRB1 and ARRB2 (codependent regulation) include ADRB2, F2RL1 and PTH1R. For some GPCRs the beta-arrestin-mediated signaling relies on either ARRB1 or ARRB2 and is inhibited by the other respective beta-arrestin form (reciprocal regulation). Increases ERK1/2 signaling in AGTR1- and AVPR2-mediated activation (reciprocal regulation). Involved in CCR7-mediated ERK1/2 signaling involving ligand CCL19. Is involved in type-1A angiotensin II receptor/AGTR1-mediated ERK activity. Is involved in type-1A angiotensin II receptor/AGTR1-mediated MAPK10 activity. Is involved in dopamine-stimulated AKT1 activity in the striatum by disrupting the association of AKT1 with its negative regulator PP2A. Involved in AGTR1-mediated chemotaxis. Appears to function as signaling scaffold involved in regulation of MIP-1-beta-stimulated CCR5-dependent chemotaxis. Involved in attenuation of NF-kappa-B-dependent transcription in response to GPCR or cytokine stimulation by interacting with and stabilizing CHUK. Suppresses UV-induced NF-kappa-B-dependent activation by interacting with CHUK. The function is promoted by stimulation of ADRB2 and dephosphorylation of ARRB2. Involved in IL8-mediated granule release in neutrophils. Involved in p53/TP53-mediated apoptosis by regulating MDM2 and reducing the MDM2-mediated degradation of p53/TP53. May serve as nuclear messenger for GPCRs. Upon stimulation of OR1D2, may be involved in regulation of gene expression during the early processes of fertilization. Also involved in regulation of receptors other than GPCRs. Involved in endocytosis of TGFBR2 and TGFBR3 and down-regulates TGF-beta signaling such as NF-kappa-B activation. Involved in endocytosis of low-density lipoprotein receptor/LDLR. Involved in endocytosis of smoothened homolog/Smo, which also requires GRK2. Involved in endocytosis of SLC9A5. Involved in endocytosis of ENG and subsequent TGF-beta-mediated ERK activation and migration of epithelial cells. Involved in Toll-like receptor and IL-1 receptor signaling through the interaction with TRAF6 which prevents TRAF6 autoubiquitination and oligomerization required for activation of NF-kappa-B and JUN. Involved in insulin resistance by acting as insulin-induced signaling scaffold for SRC, AKT1 and INSR. Involved in regulation of inhibitory signaling of natural killer cells by recruiting PTPN6 and PTPN11 to KIR2DL1. Involved in the internalization of the atypical chemokine receptor ACKR3. Acts as an adapter protein coupling FFAR4 receptor to specific downstream signaling pathways, as well as mediating receptor endocytosis. During the activation step of NLRP3 inflammasome, directly associates with NLRP3 leading to inhibition of pro-inflammatory cytokine release and inhibition of inflammation. This Mus musculus (Mouse) protein is Beta-arrestin-2 (Arrb2).